Here is a 127-residue protein sequence, read N- to C-terminus: uncharacterized protein (127 aa).

This is an uncharacterized protein from Methanocaldococcus jannaschii (strain ATCC 43067 / DSM 2661 / JAL-1 / JCM 10045 / NBRC 100440) (Methanococcus jannaschii).